We begin with the raw amino-acid sequence, 513 residues long: Lysine--tRNA ligase (513 aa).

Glu-423 and Glu-430 together coordinate Mg(2+).

Belongs to the class-II aminoacyl-tRNA synthetase family. In terms of assembly, homodimer. The cofactor is Mg(2+).

The protein resides in the cytoplasm. The catalysed reaction is tRNA(Lys) + L-lysine + ATP = L-lysyl-tRNA(Lys) + AMP + diphosphate. The protein is Lysine--tRNA ligase of Anaeromyxobacter dehalogenans (strain 2CP-C).